We begin with the raw amino-acid sequence, 930 residues long: Urea transporter 2 (930 aa).

Residues 1-11 are compositionally biased toward basic and acidic residues; that stretch reads MSDHHPLKEMS. The segment at 1–90 is disordered; that stretch reads MSDHHPLKEM…KRRESEVSRR (90 aa). 2 stretches are compositionally biased toward low complexity: residues 12-25 and 32-43; these read DSNS…PLSS and SELSSPTWPSSS. Over residues 56 to 89 the composition is skewed to basic and acidic residues; sequence PEEKDLRSSDEDSHIVKIEKPNERNKRRESEVSR. A run of 8 helical transmembrane segments spans residues 145-165, 185-205, 213-233, 242-262, 280-300, 311-331, 350-372, and 401-421; these read ISGL…TIAG, AIAS…MAVF, WWLL…SSAL, LPVF…ATGH, NITW…VGVG, GGVI…HAAI, IYLG…MFYA, and VVGV…FLLL. The tract at residues 452–479 is disordered; the sequence is SEEEKSPNGGSGEQSHGSGQWKAEESSE. Ser-487 carries the phosphoserine modification. Helical transmembrane passes span 610 to 630, 648 to 668, 676 to 696, and 705 to 725; these read GILI…SGCL, AIAA…MAVF, WWLL…SSAL, and LPVF…ATGH. Asn-743 is a glycosylation site (N-linked (GlcNAc...) asparagine). The next 4 membrane-spanning stretches (helical) occupy residues 774-794, 813-833, 842-862, and 864-884; these read GGIF…HAAI, IYFG…GGMF, LLAI…ANML, and VFGL…FLLL.

Belongs to the urea transporter family. Highly expressed in kidney medulla (at protein level). Also detected in testes, heart, brain and liver (at protein level). In the kidney, present in thin descending limbs of the loop of Henle and in the middle and terminal inner medullary collecting ducts. As to expression, expressed in the kidney medulla. In terms of tissue distribution, expressed in the peritubular myoid cells forming the outermost layer of the seminiferous tubules within the testes and is not detected in kidney. Expression levels are coordinated with the stage of testes development and increase 15 days postpartum, commensurate with the start of seminiferous tubule fluid movement.

It is found in the apical cell membrane. The protein localises to the basolateral cell membrane. The catalysed reaction is urea(in) = urea(out). With respect to regulation, inhibited by phloretin. Activated by forskolin, 3-isobutyl-1-methylxanthine (IBMX) and cAMP. Inhibited by phloretin. Its activity is regulated as follows. Inhibited by phloretin. Activated by forskolin, 3-isobutyl-1-methylxanthine (IBMX) and cAMP. In terms of biological role, mediates the transport of urea driven by a concentration gradient across the cell membrane of the renal inner medullary collecting duct which is critical to the urinary concentrating mechanism. Mediates the transport of urea driven by a concentration gradient across the cell membrane. Implicated in the urea movement across the blood-testis barrier and does not translocate water. This chain is Urea transporter 2 (Slc14a2), found in Mus musculus (Mouse).